A 438-amino-acid chain; its full sequence is Methylenetetrahydrofolate--tRNA-(uracil-5-)-methyltransferase TrmFO (438 aa).

Residue 9–14 (GAGLAG) coordinates FAD.

Belongs to the MnmG family. TrmFO subfamily. FAD serves as cofactor.

It is found in the cytoplasm. The enzyme catalyses uridine(54) in tRNA + (6R)-5,10-methylene-5,6,7,8-tetrahydrofolate + NADH + H(+) = 5-methyluridine(54) in tRNA + (6S)-5,6,7,8-tetrahydrofolate + NAD(+). It catalyses the reaction uridine(54) in tRNA + (6R)-5,10-methylene-5,6,7,8-tetrahydrofolate + NADPH + H(+) = 5-methyluridine(54) in tRNA + (6S)-5,6,7,8-tetrahydrofolate + NADP(+). Functionally, catalyzes the folate-dependent formation of 5-methyl-uridine at position 54 (M-5-U54) in all tRNAs. The sequence is that of Methylenetetrahydrofolate--tRNA-(uracil-5-)-methyltransferase TrmFO from Lactobacillus acidophilus (strain ATCC 700396 / NCK56 / N2 / NCFM).